Reading from the N-terminus, the 118-residue chain is uncharacterized protein (118 aa).

Cysteines 11 and 14 form a disulfide.

This sequence belongs to the ArsC family.

This is an uncharacterized protein from Bacillus subtilis (strain 168).